Here is a 220-residue protein sequence, read N- to C-terminus: Nucleolar protein 12 (220 aa).

Residues 31–86 (HKRKMQRRKTAVEEIKRKIKEEQKKMKEERHKEYMKMLKEREEALCELEENDELEE) adopt a coiled-coil conformation. Positions 109 to 220 (ISDLDLSGIR…QTGKTRRRRN (112 aa)) are disordered. Basic and acidic residues predominate over residues 139–148 (EKGADEEKPK). Composition is skewed to basic residues over residues 176–186 (RSQRKSGKRPS) and 205–220 (KTQRRKQTGKTRRRRN).

This sequence belongs to the RRP17 family.

Its subcellular location is the nucleus. The protein resides in the nucleolus. In terms of biological role, may bind to rRNA. The protein is Nucleolar protein 12 (nol12) of Xenopus laevis (African clawed frog).